The sequence spans 689 residues: Beta-galactosidase BbgII (689 aa).

Residues Arg-122 and Asn-160 each coordinate substrate. Glu-161 (proton donor) is an active-site residue. Glu-320 functions as the Nucleophile in the catalytic mechanism. Substrate is bound by residues Trp-328 and 368–371 (EKWH).

Belongs to the glycosyl hydrolase 42 family.

The catalysed reaction is Hydrolysis of terminal non-reducing beta-D-galactose residues in beta-D-galactosides.. This Bifidobacterium bifidum (strain DSM 20082 / JCM 1254 / BCRC 11844 / KCTC 3440 / E319f (Variant a)) protein is Beta-galactosidase BbgII.